The sequence spans 965 residues: Valine--tRNA ligase (965 aa).

The tract at residues 1-22 (MENTPSHINKTEPSLDKTYSPQ) is disordered. The 'HIGH' region signature appears at 56–66 (PNVTGSLHMGH). A 'KMSKS' region motif is present at residues 568 to 572 (KMSKS). K571 is an ATP binding site. Residues 896–965 (LIDKATELDR…IEQQATIAAL (70 aa)) are a coiled coil.

This sequence belongs to the class-I aminoacyl-tRNA synthetase family. ValS type 1 subfamily. Monomer.

It is found in the cytoplasm. It catalyses the reaction tRNA(Val) + L-valine + ATP = L-valyl-tRNA(Val) + AMP + diphosphate. In terms of biological role, catalyzes the attachment of valine to tRNA(Val). As ValRS can inadvertently accommodate and process structurally similar amino acids such as threonine, to avoid such errors, it has a 'posttransfer' editing activity that hydrolyzes mischarged Thr-tRNA(Val) in a tRNA-dependent manner. This Yersinia pestis protein is Valine--tRNA ligase.